A 185-amino-acid polypeptide reads, in one-letter code: Elongation factor P (185 aa).

Belongs to the elongation factor P family.

It is found in the cytoplasm. Its pathway is protein biosynthesis; polypeptide chain elongation. Involved in peptide bond synthesis. Stimulates efficient translation and peptide-bond synthesis on native or reconstituted 70S ribosomes in vitro. Probably functions indirectly by altering the affinity of the ribosome for aminoacyl-tRNA, thus increasing their reactivity as acceptors for peptidyl transferase. This is Elongation factor P from Agathobacter rectalis (strain ATCC 33656 / DSM 3377 / JCM 17463 / KCTC 5835 / VPI 0990) (Eubacterium rectale).